A 448-amino-acid polypeptide reads, in one-letter code: Methylenetetrahydrofolate--tRNA-(uracil-5-)-methyltransferase TrmFO (448 aa).

10–15 provides a ligand contact to FAD; it reads GAGLAG.

The protein belongs to the MnmG family. TrmFO subfamily. FAD is required as a cofactor.

The protein resides in the cytoplasm. It carries out the reaction uridine(54) in tRNA + (6R)-5,10-methylene-5,6,7,8-tetrahydrofolate + NADH + H(+) = 5-methyluridine(54) in tRNA + (6S)-5,6,7,8-tetrahydrofolate + NAD(+). The enzyme catalyses uridine(54) in tRNA + (6R)-5,10-methylene-5,6,7,8-tetrahydrofolate + NADPH + H(+) = 5-methyluridine(54) in tRNA + (6S)-5,6,7,8-tetrahydrofolate + NADP(+). Functionally, catalyzes the folate-dependent formation of 5-methyl-uridine at position 54 (M-5-U54) in all tRNAs. The sequence is that of Methylenetetrahydrofolate--tRNA-(uracil-5-)-methyltransferase TrmFO from Lactococcus lactis subsp. cremoris (strain SK11).